Reading from the N-terminus, the 880-residue chain is Alanine--tRNA ligase (880 aa).

Residues histidine 563, histidine 567, cysteine 665, and histidine 669 each coordinate Zn(2+).

The protein belongs to the class-II aminoacyl-tRNA synthetase family. Requires Zn(2+) as cofactor.

The protein resides in the cytoplasm. It catalyses the reaction tRNA(Ala) + L-alanine + ATP = L-alanyl-tRNA(Ala) + AMP + diphosphate. Functionally, catalyzes the attachment of alanine to tRNA(Ala) in a two-step reaction: alanine is first activated by ATP to form Ala-AMP and then transferred to the acceptor end of tRNA(Ala). Also edits incorrectly charged Ser-tRNA(Ala) and Gly-tRNA(Ala) via its editing domain. The chain is Alanine--tRNA ligase from Desulforudis audaxviator (strain MP104C).